Here is a 278-residue protein sequence, read N- to C-terminus: Tryptophan synthase alpha chain (278 aa).

Catalysis depends on proton acceptor residues E50 and D61.

The protein belongs to the TrpA family. In terms of assembly, tetramer of two alpha and two beta chains.

The enzyme catalyses (1S,2R)-1-C-(indol-3-yl)glycerol 3-phosphate + L-serine = D-glyceraldehyde 3-phosphate + L-tryptophan + H2O. It functions in the pathway amino-acid biosynthesis; L-tryptophan biosynthesis; L-tryptophan from chorismate: step 5/5. In terms of biological role, the alpha subunit is responsible for the aldol cleavage of indoleglycerol phosphate to indole and glyceraldehyde 3-phosphate. The sequence is that of Tryptophan synthase alpha chain from Methylobacterium nodulans (strain LMG 21967 / CNCM I-2342 / ORS 2060).